The chain runs to 249 residues: Metallo-beta-lactamase type 2 (249 aa).

Positions 1 to 18 are cleaved as a signal peptide; sequence MKTVFILISMLFPVAVMA. Positions 99, 101, 103, 162, and 181 each coordinate Zn(2+). Positions 184 and 193 each coordinate substrate. His-223 contributes to the Zn(2+) binding site.

The protein belongs to the metallo-beta-lactamase superfamily. Class-B beta-lactamase family. Monomer. Zn(2+) is required as a cofactor.

It is found in the periplasm. The catalysed reaction is a beta-lactam + H2O = a substituted beta-amino acid. Its activity is regulated as follows. Competitively inhibited by 4-morpholineethanesulfonic acid (MES), SB236050 and biphenyl tetrazoles (BPTs). Also inhibited by chelating agents such as EDTA and 1,10-phenanthroline. CcrA is not susceptible to inactivation by the beta-lactamase-blocking agents clavulanic acid or tazobactam. In terms of biological role, confers resistance to the different beta-lactams antibiotics (penicillin, cephalosporin and carbapenem) via the hydrolysis of the beta-lactam ring. The sequence is that of Metallo-beta-lactamase type 2 from Bacteroides fragilis.